Consider the following 497-residue polypeptide: Probable cytosol aminopeptidase (497 aa).

Positions 265 and 270 each coordinate Mn(2+). The active site involves lysine 277. Residues aspartate 288, aspartate 347, and glutamate 349 each coordinate Mn(2+). Arginine 351 is a catalytic residue.

Belongs to the peptidase M17 family. Mn(2+) is required as a cofactor.

The protein localises to the cytoplasm. It catalyses the reaction Release of an N-terminal amino acid, Xaa-|-Yaa-, in which Xaa is preferably Leu, but may be other amino acids including Pro although not Arg or Lys, and Yaa may be Pro. Amino acid amides and methyl esters are also readily hydrolyzed, but rates on arylamides are exceedingly low.. The catalysed reaction is Release of an N-terminal amino acid, preferentially leucine, but not glutamic or aspartic acids.. Presumably involved in the processing and regular turnover of intracellular proteins. Catalyzes the removal of unsubstituted N-terminal amino acids from various peptides. The polypeptide is Probable cytosol aminopeptidase (Geobacillus sp. (strain WCH70)).